A 48-amino-acid polypeptide reads, in one-letter code: ATP synthase protein 8 (48 aa).

A helical transmembrane segment spans residues 13 to 32 (LTYGFLLMITLLILFSQFFL).

The protein belongs to the ATPase protein 8 family. F-type ATPases have 2 components, CF(1) - the catalytic core - and CF(0) - the membrane proton channel. In yeast, the dimeric form of ATP synthase consists of 17 polypeptides: alpha, beta, gamma, delta, epsilon, 4 (B), 5 (OSCP), 6 (A), 8, 9 (C), d, E (Tim11), f, g, h, i/j and k.

The protein resides in the mitochondrion membrane. In terms of biological role, mitochondrial membrane ATP synthase (F(1)F(0) ATP synthase or Complex V) produces ATP from ADP in the presence of a proton gradient across the membrane which is generated by electron transport complexes of the respiratory chain. F-type ATPases consist of two structural domains, F(1) - containing the extramembraneous catalytic core and F(0) - containing the membrane proton channel, linked together by a central stalk and a peripheral stalk. During catalysis, ATP synthesis in the catalytic domain of F(1) is coupled via a rotary mechanism of the central stalk subunits to proton translocation. Part of the complex F(0) domain. Minor subunit located with subunit a in the membrane. The chain is ATP synthase protein 8 (ATP8) from Saccharomyces cerevisiae (strain ATCC 204508 / S288c) (Baker's yeast).